The following is a 202-amino-acid chain: Elongation factor Ts, chloroplastic (202 aa).

The protein belongs to the EF-Ts family.

Its subcellular location is the plastid. It is found in the chloroplast. Associates with the EF-Tu.GDP complex and induces the exchange of GDP to GTP. It remains bound to the aminoacyl-tRNA.EF-Tu.GTP complex up to the GTP hydrolysis stage on the ribosome. The chain is Elongation factor Ts, chloroplastic (tsf) from Phaeodactylum tricornutum (strain CCAP 1055/1).